The following is a 465-amino-acid chain: Solute carrier family 7 member 12 (465 aa).

Over 1 to 6 the chain is Cytoplasmic; it reads MQLLRA. A helical membrane pass occupies residues 7-27; it reads LGVFHVSMILFSATLGTGIFV. The Extracellular segment spans residues 28 to 39; the sequence is TPKAVLKYSSLN. The helical transmembrane segment at 40 to 60 threads the bilayer; the sequence is IPVSLSIWAGCGLLSIMSALC. Residues 61-81 lie on the Cytoplasmic side of the membrane; it reads NAEIATTYPLSGASYYFLKRT. A helical membrane pass occupies residues 82–102; sequence LGSSVAFLSLWIKLFAHFLGI. Residues 103–132 lie on the Extracellular side of the membrane; that stretch reads GAQCLLIATSVIQCFYSGCPAPELPTKCLA. The helical transmembrane segment at 133–153 threads the bilayer; it reads LAILWSFGIVSARGIKTVAWF. A topological domain (cytoplasmic) is located at residue N154. A helical transmembrane segment spans residues 155 to 175; the sequence is TVSSFIKLSVLCLISLTVLLV. Over 176 to 202 the chain is Extracellular; that stretch reads NGKKENVSRFENALDAELPNASQIADA. Residues 203 to 223 form a helical membrane-spanning segment; the sequence is ILQVSYSYLGSSVLIVIAGEI. Over 224-234 the chain is Cytoplasmic; sequence KRPTETIPKTL. Residues 235–255 traverse the membrane as a helical segment; sequence IYGISIVTVLYLLTNISYLAV. At 256-280 the chain is on the extracellular side; sequence LTSQEIIFSDSVGVTWMNRVFPSIQ. A helical transmembrane segment spans residues 281-301; it reads WISSFLISAFLLGSVSCGIVS. Over 302 to 327 the chain is Cytoplasmic; sequence ASRVFYSASQEGEFPSIYSMLNDHHS. Residues 328–351 form a helical membrane-spanning segment; sequence PAVADIQIVILSSVAIISSSIIYL. Residues 352-356 are Extracellular-facing; sequence VKYVS. Residues 357–375 form a helical membrane-spanning segment; that stretch reads LGSFCINLLQMIGLLKIRY. Over 376–386 the chain is Cytoplasmic; sequence QNPDIPRPYKV. The chain crosses the membrane as a helical span at residues 387–407; it reads WLPFIFGSIALSLFLIFTPVI. Residues 408–409 lie on the Extracellular side of the membrane; sequence QS. The helical transmembrane segment at 410-430 threads the bilayer; the sequence is PSIEHVYQVVFLFCGFLCYWL. The Cytoplasmic portion of the chain corresponds to 431 to 465; it reads QANLNGHATCFDTITCYCQLLFNISPSEDPEEQKN.

It belongs to the amino acid-polyamine-organocation (APC) superfamily. As to quaternary structure, probably forms multimers, perhaps with an unknown protein(s). As to expression, expressed in kidney and red blood cells (at protein level). Expressed in kidney along the collecting ducts in the cortex, outer and inner medulla. May be expressed in placenta, lungs, spleen and skeletal muscles.

It localises to the apical cell membrane. The protein localises to the basal cell membrane. It is found in the cytoplasm. Functionally, probably mediates sodium- and chloride-independent uptake of neutral amino acids. The polypeptide is Solute carrier family 7 member 12 (Mus musculus (Mouse)).